The sequence spans 200 residues: LexA repressor (200 aa).

The segment at residues 29-48 (IRDIARAFRITPRGAIVHLN) is a DNA-binding region (H-T-H motif). Catalysis depends on for autocatalytic cleavage activity residues Ser-120 and Lys-158.

This sequence belongs to the peptidase S24 family. As to quaternary structure, homodimer.

The enzyme catalyses Hydrolysis of Ala-|-Gly bond in repressor LexA.. Represses a number of genes involved in the response to DNA damage (SOS response), including recA and lexA. In the presence of single-stranded DNA, RecA interacts with LexA causing an autocatalytic cleavage which disrupts the DNA-binding part of LexA, leading to derepression of the SOS regulon and eventually DNA repair. In Pseudothermotoga lettingae (strain ATCC BAA-301 / DSM 14385 / NBRC 107922 / TMO) (Thermotoga lettingae), this protein is LexA repressor.